Here is an 81-residue protein sequence, read N- to C-terminus: Defensin-like protein 313 (81 aa).

Positions 1–32 (MESKRSSSSPLLILITTIMIIFIISGPKSVDA) are cleaved as a signal peptide. Intrachain disulfides connect Cys34–Cys63, Cys45–Cys74, and Cys49–Cys76.

It belongs to the DEFL family.

The protein resides in the secreted. The sequence is that of Defensin-like protein 313 from Arabidopsis thaliana (Mouse-ear cress).